Consider the following 71-residue polypeptide: Small ribosomal subunit protein bS21 (71 aa).

Residues 50-59 (AAAVKRHAKK) are compositionally biased toward basic residues. The interval 50–71 (AAAVKRHAKKVQREQRRAVRLY) is disordered. The segment covering 60–71 (VQREQRRAVRLY) has biased composition (basic and acidic residues).

This sequence belongs to the bacterial ribosomal protein bS21 family.

The sequence is that of Small ribosomal subunit protein bS21 from Pseudomonas fluorescens (strain ATCC BAA-477 / NRRL B-23932 / Pf-5).